The following is a 288-amino-acid chain: MASLKSIKKRIVSVKNTRQITKAMKMVSAAKLRRAQENVVAARPYAQKMGEVLQSLAGNLEGNLHPLLEKRDAKKLLLIVVTSDRGLCGGFNTNLCKAGERYIKEKQAEFDQISIMTVGRKGYEFLKSRHTVYKNFANMLSKPNYQAAAMLAQDVIEGYLAEEYDQVVMLFNSFRTVMSQDITFQQLLPIEPEEKIAADENGVEYIYEPSVSDLLTEILPKNIEVQIFKAMLESVAGEHGARMTAMDSASKNASEMIGKLTLQYNRARQAAITTELMEIISGAESIKG.

Belongs to the ATPase gamma chain family. As to quaternary structure, F-type ATPases have 2 components, CF(1) - the catalytic core - and CF(0) - the membrane proton channel. CF(1) has five subunits: alpha(3), beta(3), gamma(1), delta(1), epsilon(1). CF(0) has three main subunits: a, b and c.

Its subcellular location is the cell inner membrane. Functionally, produces ATP from ADP in the presence of a proton gradient across the membrane. The gamma chain is believed to be important in regulating ATPase activity and the flow of protons through the CF(0) complex. This is ATP synthase gamma chain from Trichlorobacter lovleyi (strain ATCC BAA-1151 / DSM 17278 / SZ) (Geobacter lovleyi).